The primary structure comprises 793 residues: E3 UFM1-protein ligase 1 (793 aa).

Residue A2 is modified to N-acetylalanine. Residues 2–200 form a mediates interaction with DDRGK1 region; that stretch reads ADAWEEIRRL…RGLFSAITRP (199 aa). The required for E3 UFM1-protein ligase activity stretch occupies residues 2–212; that stretch reads ADAWEEIRRL…VNSLVSKYGF (211 aa). The interval 121–250 is involved in CDK5RAP3-binding; sequence DRLSEEVNDK…KAVFVPDIYS (130 aa). Residues 200 to 400 are mediates interaction with TRIP4; that stretch reads PTAVNSLVSK…NPVHLITEED (201 aa). Residues 410-473 form a disordered region; it reads VNTNKKDKKD…SSHAGKKKPD (64 aa). R433 bears the Omega-N-methylarginine mark. A phosphoserine mark is found at S458 and S462. The segment at 490 to 683 is mediates interaction with CDK5RAP3; the sequence is IPDAPEEFIS…QLKVTEDPAL (194 aa). T535 is subject to Phosphothreonine. Positions 742–769 are disordered; the sequence is NKKSGQGEDPSSDDLDKEQHDVTNTTRK. Residues S752 and S753 each carry the phosphoserine modification. Over residues 758–769 the composition is skewed to basic and acidic residues; the sequence is KEQHDVTNTTRK.

The protein belongs to the UFL1 family. In terms of assembly, catalytic component of the UFM1 ribosome E3 ligase (UREL) complex, composed of UFL1, DDRGK1 and CDK5RAP3. Interacts with E2-like enzyme UFC1. Interacts with RELA. Interacts with NBN; promoting recruitment to double-strand breaks following DNA damage. Interacts (when phosphorylated) with YWHAG/14-3-3-gamma; sequestering UFL1 and preventing its association with PDCD1/PD-1 substrate. In terms of processing, ubiquitinated, leading to its degradation by the proteasome. Interaction with CDK5RAP3 protects both proteins against ubiquitination and degradation via the proteasome. Post-translationally, phosphorylated at Ser-462 by ATM, enhancing protein ligase activity and promoting ATM activation in a positive feedback loop. Phosphorylation at Thr-535 by AMPK promotes its interaction with YWHAG/14-3-3-gamma, thereby preventing UFL1 association with PDCD1/PD-1 substrate. Ubiquitously expressed with expression detected in brain, skeletal muscle, lung, heart, gall bladder, liver, small intestine, pancreas, spleen and kidney (at protein level). At 8 weeks after birth, high expression in the Purkinje cell layer of the cerebellum.

Its subcellular location is the endoplasmic reticulum membrane. The protein resides in the cytoplasm. It localises to the cytosol. It is found in the nucleus. The protein localises to the chromosome. E3 protein ligase that mediates ufmylation, the covalent attachment of the ubiquitin-like modifier UFM1 to lysine residues on target proteins, and which plays a key role in various processes, such as ribosome recycling, response to DNA damage, interferon response or reticulophagy (also called ER-phagy). Catalyzes ufmylation of many protein, such as CD274/PD-L1, CDK5RAP3, CYB5R3, DDRGK1, EIF6, histone H4, MRE11, P4HB, PDCD1/PD-1, TRIP4, RPN1, RPS20/uS10, RPL10/uL16, RPL26/uL24, SYVN1/HRD1 and TP53/p53. As part of the UREL complex, plays a key role in ribosome recycling by catalyzing mono-ufmylation of RPL26/uL24 subunit of the 60S ribosome. Ufmylation of RPL26/uL24 occurs on free 60S ribosomes following ribosome dissociation: it weakens the junction between post-termination 60S subunits and SEC61 translocons, promoting release and recycling of the large ribosomal subunit from the endoplasmic reticulum membrane. Ufmylation of RPL26/uL24 and subsequent 60S ribosome recycling either take place after normal termination of translation or after ribosome stalling during cotranslational translocation at the endoplasmic reticulum. Involved in reticulophagy in response to endoplasmic reticulum stress by mediating ufmylation of proteins such as CYB5R3 and RPN1, thereby promoting lysosomal degradation of ufmylated proteins. Ufmylation in response to endoplasmic reticulum stress is essential for processes such as hematopoiesis, blood vessel morphogenesis or inflammatory response. Mediates ufmylation of DDRGK1 and CDK5RAP3; the role of these modifications is however unclear: as both DDRGK1 and CDK5RAP3 act as substrate adapters for ufmylation, it is uncertain whether ufmylation of these proteins is, a collateral effect or is required for ufmylation. Acts as a negative regulator of T-cell activation by mediating ufmylation and stabilization of PDCD1/PD-1. Also involved in the response to DNA damage: recruited to double-strand break sites following DNA damage and mediates monoufmylation of histone H4 and ufmylation of MRE11. Mediates ufmylation of TP53/p53, promoting its stability. Catalyzes ufmylation of TRIP4, thereby playing a role in nuclear receptor-mediated transcription. Required for hematopoietic stem cell function and hematopoiesis. The sequence is that of E3 UFM1-protein ligase 1 from Rattus norvegicus (Rat).